We begin with the raw amino-acid sequence, 391 residues long: 1-deoxy-D-xylulose 5-phosphate reductoisomerase (391 aa).

NADPH is bound by residues threonine 17, glycine 18, serine 19, isoleucine 20, asparagine 47, and asparagine 130. Residue lysine 131 participates in 1-deoxy-D-xylulose 5-phosphate binding. Residue glutamate 132 participates in NADPH binding. Mn(2+) is bound at residue aspartate 156. Residues serine 157, glutamate 158, serine 182, and histidine 205 each contribute to the 1-deoxy-D-xylulose 5-phosphate site. Glutamate 158 provides a ligand contact to Mn(2+). Glycine 211 lines the NADPH pocket. Serine 218, asparagine 223, lysine 224, and glutamate 227 together coordinate 1-deoxy-D-xylulose 5-phosphate. Mn(2+) is bound at residue glutamate 227.

Belongs to the DXR family. Mg(2+) serves as cofactor. It depends on Mn(2+) as a cofactor.

The catalysed reaction is 2-C-methyl-D-erythritol 4-phosphate + NADP(+) = 1-deoxy-D-xylulose 5-phosphate + NADPH + H(+). Its pathway is isoprenoid biosynthesis; isopentenyl diphosphate biosynthesis via DXP pathway; isopentenyl diphosphate from 1-deoxy-D-xylulose 5-phosphate: step 1/6. Its function is as follows. Catalyzes the NADPH-dependent rearrangement and reduction of 1-deoxy-D-xylulose-5-phosphate (DXP) to 2-C-methyl-D-erythritol 4-phosphate (MEP). This is 1-deoxy-D-xylulose 5-phosphate reductoisomerase from Rhizobium meliloti (strain 1021) (Ensifer meliloti).